Consider the following 1418-residue polypeptide: Protein ced-11 (1418 aa).

Transmembrane regions (helical) follow at residues 617 to 637 (FPIF…IIPV), 755 to 775 (YWLS…SVVL), 782 to 802 (LWDT…CFVL), 818 to 838 (VFDV…KVFP), 856 to 876 (VVSA…YIPL), 898 to 918 (FLFM…AVVF), and 986 to 1006 (IVIE…FAFF).

It localises to the membrane. Its function is as follows. Plays a major role in programmed cell death. This chain is Protein ced-11 (ced-11), found in Caenorhabditis elegans.